We begin with the raw amino-acid sequence, 551 residues long: Transcription factor 7-like 1-B (551 aa).

Positions 1-11 (MPQLNGGGGDE) are enriched in gly residues. Disordered regions lie at residues 1 to 76 (MPQL…DLES), 298 to 326 (QEPNGELSPPVNTKSPGPNKKDEDKKPHI), and 392 to 525 (GWSA…PPSP). A compositionally biased stretch (basic and acidic residues) spans 19–32 (ISFKDEGEQEDKIS). Residues 46 to 61 (SSLVSESENNSSSSDS) are compositionally biased toward low complexity. A compositionally biased stretch (basic and acidic residues) spans 63–76 (QTERRPQPRADLES). Residues 326–394 (IKKPLNAFML…LHSQLYPGWS (69 aa)) constitute a DNA-binding region (HMG box). A compositionally biased stretch (low complexity) spans 449–468 (SPATPSAALASPAAPAATHS). Positions 469-478 (EQAQPLSLTT) are enriched in polar residues. A compositionally biased stretch (low complexity) spans 493–505 (SSSSSSSSSSSGL).

It belongs to the TCF/LEF family. As to quaternary structure, interacts with ctnnb1.

The protein resides in the nucleus. In terms of biological role, participates in the Wnt signaling pathway. Probably binds to DNA and acts as a repressor in the absence of ctnnb1, and possibly as an activator in its presence. Regulates anterior-posterior patterning in the neuroectoderm by repressing posterior neural fates. Also required for hindbrain morphogenesis. The sequence is that of Transcription factor 7-like 1-B (tcf7l1b) from Danio rerio (Zebrafish).